The sequence spans 592 residues: Beta-xylosidase (592 aa).

Residues 1 to 19 form the signal peptide; that stretch reads MYLNACRALTLISVLSLLA. The N-palmitoyl cysteine moiety is linked to residue C20. C20 carries the S-diacylglycerol cysteine lipid modification.

It belongs to the glycosyl hydrolase 43 family.

It is found in the cell outer membrane. Xylosidase involved in ulvan degradation. Ulvan is the main polysaccharide component of the Ulvales (green seaweed) cell wall. It is composed of disaccharide building blocks comprising 3-sulfated rhamnose (Rha3S) linked to D-glucuronic acid (GlcA), L-iduronic acid (IduA), or D-xylose (Xyl). Beta-xylosidase converts Xyl-Rha3S, a product of alpha-L-rhamnosidase acting on Rha-Xyl-Rha3S oligosaccharides, further to Xyl and Rha3S. This is Beta-xylosidase from Formosa agariphila (strain DSM 15362 / KCTC 12365 / LMG 23005 / KMM 3901 / M-2Alg 35-1).